We begin with the raw amino-acid sequence, 196 residues long: Oocyte zinc finger protein XlCOF26 (196 aa).

7 consecutive C2H2-type zinc fingers follow at residues 6–28, 34–56, 62–84, 90–112, 118–140, 146–168, and 174–196; these read YSCT…QKNH, FTCT…QRIH, FTCT…HKIH, FTCP…QRTH, FTCT…QSTH, and FTCT…QMTH.

It belongs to the krueppel C2H2-type zinc-finger protein family.

It is found in the nucleus. Functionally, may be involved in transcriptional regulation. The protein is Oocyte zinc finger protein XlCOF26 of Xenopus laevis (African clawed frog).